The chain runs to 319 residues: Tetrahydromethanopterin S-methyltransferase subunit H (319 aa).

This sequence belongs to the MtrH family. The complex is composed of 8 subunits; MtrA, MtrB, MtrC, MtrD, MtrE, MtrF, MtrG and MtrH.

It catalyses the reaction 5-methyl-5,6,7,8-tetrahydromethanopterin + coenzyme M + 2 Na(+)(in) = 5,6,7,8-tetrahydromethanopterin + methyl-coenzyme M + 2 Na(+)(out). The protein operates within one-carbon metabolism; methanogenesis from CO(2); methyl-coenzyme M from 5,10-methylene-5,6,7,8-tetrahydromethanopterin: step 2/2. Its function is as follows. Part of a complex that catalyzes the formation of methyl-coenzyme M and tetrahydromethanopterin from coenzyme M and methyl-tetrahydromethanopterin. This is an energy-conserving, sodium-ion translocating step. MtrH catalyzes the transfer of the methyl group from methyl-tetrahydromethanopterin to the corrinoid prosthetic group of MtrA. This is Tetrahydromethanopterin S-methyltransferase subunit H from Methanococcus aeolicus (strain ATCC BAA-1280 / DSM 17508 / OCM 812 / Nankai-3).